Reading from the N-terminus, the 265-residue chain is Zinc import ATP-binding protein ZnuC (265 aa).

The ABC transporter domain occupies 6–221; that stretch reads IRLEQVAVTL…PAFVELFGKN (216 aa). ATP is bound at residue 38–45; sequence GPNGAGKT. The disordered stretch occupies residues 245-265; that stretch reads DAPATSSHTHTHVHGDHCKHG.

This sequence belongs to the ABC transporter superfamily. Zinc importer (TC 3.A.1.15.5) family. In terms of assembly, the complex is composed of two ATP-binding proteins (ZnuC), two transmembrane proteins (ZnuB) and a solute-binding protein (ZnuA).

It localises to the cell inner membrane. It carries out the reaction Zn(2+)(out) + ATP(in) + H2O(in) = Zn(2+)(in) + ADP(in) + phosphate(in) + H(+)(in). Its function is as follows. Part of the ABC transporter complex ZnuABC involved in zinc import. Responsible for energy coupling to the transport system. The polypeptide is Zinc import ATP-binding protein ZnuC (Pseudomonas savastanoi pv. phaseolicola (strain 1448A / Race 6) (Pseudomonas syringae pv. phaseolicola (strain 1448A / Race 6))).